Here is a 572-residue protein sequence, read N- to C-terminus: [Pyruvate dehydrogenase [acetyl-transferring]]-phosphatase 1, mitochondrial (572 aa).

Residues 95-122 form a disordered region; that stretch reads NTSGNINMPSPNPKGTETQKSQRSQNDQ. Residues 153-543 enclose the PPM-type phosphatase domain; the sequence is RYDVAQLPSN…DDLTVTVAFF (391 aa). Mn(2+) is bound by residues aspartate 197, glycine 198, aspartate 424, and aspartate 480. Positions 470-480 are enriched in basic and acidic residues; the sequence is EAQRPAFRYKD. The disordered stretch occupies residues 470–492; it reads EAQRPAFRYKDNNSSSPSGSNPE. Over residues 481–491 the composition is skewed to low complexity; that stretch reads NNSSSPSGSNP.

The protein belongs to the PP2C family. It depends on Mg(2+) as a cofactor. Mn(2+) serves as cofactor. In terms of processing, processed by mitochondrial inner membrane protease (IMP) complex and released to the intermembrane space.

The protein resides in the mitochondrion intermembrane space. It carries out the reaction O-phospho-L-seryl-[pyruvate dehydrogenase E1 alpha subunit] + H2O = L-seryl-[pyruvate dehydrogenase E1 alpha subunit] + phosphate. In terms of biological role, catalyzes the dephosphorylation and concomitant reactivation of the E1 alpha subunit (PDA1) of the pyruvate dehydrogenase complex. The chain is [Pyruvate dehydrogenase [acetyl-transferring]]-phosphatase 1, mitochondrial (PTC5) from Saccharomyces cerevisiae (strain ATCC 204508 / S288c) (Baker's yeast).